A 449-amino-acid polypeptide reads, in one-letter code: Secretin receptor (449 aa).

The first 25 residues, 1-25, serve as a signal peptide directing secretion; that stretch reads MLSTMRPRLSLLLLRLLLLTKAAHT. The Extracellular portion of the chain corresponds to 26–141; the sequence is VGVPPRLCDV…NERRHAYLLK (116 aa). Disulfide bonds link cysteine 46–cysteine 75, cysteine 66–cysteine 107, and cysteine 89–cysteine 123. Residues asparagine 72, asparagine 100, asparagine 106, and asparagine 128 are each glycosylated (N-linked (GlcNAc...) asparagine). A helical transmembrane segment spans residues 142–167; sequence LKVMYTVGYSSSLAMLLVALSILCSF. Over 168–174 the chain is Cytoplasmic; sequence RRLHCTR. The chain crosses the membrane as a helical span at residues 175–195; that stretch reads NYIHMHLFVSFILRALSNFIK. Residues 196–216 are Extracellular-facing; the sequence is DAVLFSSDDVTYCDAHKVGCK. Cysteines 215 and 285 form a disulfide. The chain crosses the membrane as a helical span at residues 217-239; it reads LVMIFFQYCIMANYAWLLVEGLY. At 240–254 the chain is on the cytoplasmic side; the sequence is LHTLLAISFFSERKY. The chain crosses the membrane as a helical span at residues 255–276; that stretch reads LQAFVLLGWGSPAIFVALWAIT. The Extracellular segment spans residues 277–291; it reads RHFLENTGCWDINAN. Asparagine 291 is a glycosylation site (N-linked (GlcNAc...) asparagine). Residues 292–315 form a helical membrane-spanning segment; it reads ASVWWVIRGPVILSILINFIFFIN. Residues 316 to 340 are Cytoplasmic-facing; that stretch reads ILRILMRKLRTQETRGSETNHYKRL. A helical membrane pass occupies residues 341–356; that stretch reads AKSTLLLIPLFGIHYI. The Extracellular segment spans residues 357–367; it reads VFAFSPEDAME. The chain crosses the membrane as a helical span at residues 368-391; sequence VQLFFELALGSFQGLVVAVLYCFL. Over 392 to 449 the chain is Cytoplasmic; that stretch reads NGEVQLEVQKKWRQWHLQEFPLRPVAFNNSFSNATNGPTHSTKASTEQSRSIPRASII. Positions 425 to 442 are enriched in polar residues; it reads ATNGPTHSTKASTEQSRS. The disordered stretch occupies residues 425–449; sequence ATNGPTHSTKASTEQSRSIPRASII.

The protein belongs to the G-protein coupled receptor 2 family. Post-translationally, phosphorylated on Ser and Thr residues at the cytoplasmic C-terminus by G protein-coupled receptor kinases (GRKs). In terms of processing, N-glycosylated. In terms of tissue distribution, in the brain, expressed in the central amygdala, hippocampus, area postrema, nucleus of the tractus solitary and cerebellum.

It is found in the cell membrane. It localises to the basolateral cell membrane. G protein-coupled receptor activated by secretin (SCT), which is involved in different processes such as regulation of the pH of the duodenal content, food intake and water homeostasis. Ligand binding causes a conformation change that triggers signaling via guanine nucleotide-binding proteins (G proteins) and activates cAMP-dependent pathway. Upon binding to secretin, regulates the pH of the duodenum by (1) inhibiting the secretion of gastric acid from the parietal cells of the stomach and (2) stimulating the production of bicarbonate (NaHCO(3)) from the ductal cells of the pancreas. In addition to regulating the pH of the duodenal content, plays a central role in diet induced thermogenesis: acts as a non-sympathetic brown fat (BAT) activator mediating prandial thermogenesis, which consequentially induces satiation. Mechanistically, secretin released by the gut after a meal binds to secretin receptor (SCTR) in brown adipocytes, activating brown fat thermogenesis by stimulating lipolysis, which is sensed in the brain and promotes satiation. Also able to stimulate lipolysis in white adipocytes. Also plays an important role in cellular osmoregulation by regulating renal water reabsorption. Also plays a role in the central nervous system: required for synaptic plasticity. This Rattus norvegicus (Rat) protein is Secretin receptor.